We begin with the raw amino-acid sequence, 420 residues long: MKFTNLTAKEFGAFTDSMPYSHFTQTVGHYELKLAEGYETHLVGIKNNNNEVIAACLLTAVPVMKVFKYFYSNRGPVIDYENQELVHFFFNELSKYVKKHRCLYLHIDPYLPYQYLNHDGEITGNASNDWFFDKMSNLGFEHTGFHKGFDPVLQIRYHSVLDLKDKTADDIIKNMDGLRKRNTKKVKKNGVKVRYLSEEELPIFRSFMEDTSESKAFADRDDKFYYNRLKYYKDRVLVPLAYINFDEYIKELNEERDILNKDLNKALKDIEKRPENKKAHNKRDNLQQQLDANEQKIEEGKRLQEEHGNELPISAGFFFINPFEVVYYAGGTSNAFRHFAGSYAVQWEMINYALNHGIDRYNFYGVSGKFTEDAEDTGVVKFKKGYNAEIIEYVGDFIKPINKPVYAAYTALKKVKDRIF.

It belongs to the FemABX family. As to quaternary structure, homodimer. Interacts with FemB.

The protein resides in the cytoplasm. It catalyses the reaction beta-D-GlcNAc-(1-&gt;4)-Mur2Ac(oyl-L-Ala-D-isoglutaminyl-L-Lys-(N(6)-Gly)-D-Ala-D-Ala)-di-trans,octa-cis-undecaprenyl diphosphate + 2 glycyl-tRNA(Gly) = MurNAc-L-Ala-D-isoglutaminyl-L-Lys-(N(6)-tri-Gly)-D-Ala-D-Ala-diphospho-di-trans,octa-cis-undecaprenyl-GlcNAc + 2 tRNA(Gly) + 2 H(+). Catalyzes the formation of the pentaglycine interpeptide bridge, which is characteristic of the S.aureus peptidoglycan. Adds glycines 2 and 3 of the pentaglycine bridge, using glycyl-tRNA(Gly) as donor. The polypeptide is Aminoacyltransferase FemA (femA) (Staphylococcus aureus (strain bovine RF122 / ET3-1)).